A 405-amino-acid polypeptide reads, in one-letter code: Phosphatidylinositol 5-phosphate 4-kinase type-2 alpha (405 aa).

Residues 32-404 (ASDPLLSVLM…RFLDFIANIL (373 aa)) form the PIPK domain. A disordered region spans residues 287–326 (QEEVECEENDGEDEGESDGTHPIGTPPDSPGNTLNSSLPL). Acidic residues predominate over residues 288-303 (EEVECEENDGEDEGES).

As to quaternary structure, homodimer. Post-translationally, phosphorylated in tyrosines. Phosphorylation is induced by light and increases kinase activity.

Its subcellular location is the cell membrane. It localises to the nucleus. It is found in the lysosome. The protein resides in the cytoplasm. The catalysed reaction is a 1,2-diacyl-sn-glycero-3-phospho-(1D-myo-inositol-5-phosphate) + ATP = a 1,2-diacyl-sn-glycero-3-phospho-(1D-myo-inositol-4,5-bisphosphate) + ADP + H(+). It carries out the reaction 1,2-dihexadecanoyl-sn-glycero-3-phospho-(1D-myo-inositol-5-phosphate) + ATP = 1,2-dihexadecanoyl-sn-glycero-3-phospho-(1D-myo-inositol-4,5-bisphosphate) + ADP + H(+). The enzyme catalyses 1,2-dihexadecanoyl-sn-glycero-3-phospho-(1D-myo-inositol-5-phosphate) + GTP = 1,2-dihexadecanoyl-sn-glycero-3-phospho-(1D-myo-inositol-4,5-bisphosphate) + GDP + H(+). In rod outer segments, activated by light. Its function is as follows. Catalyzes the phosphorylation of phosphatidylinositol 5-phosphate (PtdIns5P) on the fourth hydroxyl of the myo-inositol ring, to form phosphatidylinositol 4,5-bisphosphate (PtdIns(4,5)P2). Has both ATP- and GTP-dependent kinase activities. In Gallus gallus (Chicken), this protein is Phosphatidylinositol 5-phosphate 4-kinase type-2 alpha (PIP4K2A).